A 259-amino-acid chain; its full sequence is Phosphatidate cytidylyltransferase (259 aa).

The next 7 membrane-spanning stretches (helical) occupy residues 31–51 (LVIFLPKSLFLLVILFLCFAI), 69–89 (PLVLLTYYFADPLVFPLIGLL), 103–123 (FFKSTFLLFYPALFLVYLIKI), 129–149 (YYLLIFIFGIWINDVFAYYIG), 170–190 (FLGGVLFGSLFFALTLPYGIL), 193–213 (FLLGTFVLTVGVAGDYFKSFI), and 236–256 (FDALVFSAPVFYLIMCAGELN).

This sequence belongs to the CDS family.

Its subcellular location is the cell membrane. It carries out the reaction a 1,2-diacyl-sn-glycero-3-phosphate + CTP + H(+) = a CDP-1,2-diacyl-sn-glycerol + diphosphate. It functions in the pathway phospholipid metabolism; CDP-diacylglycerol biosynthesis; CDP-diacylglycerol from sn-glycerol 3-phosphate: step 3/3. The sequence is that of Phosphatidate cytidylyltransferase (cdsA) from Aquifex aeolicus (strain VF5).